Reading from the N-terminus, the 55-residue chain is Large ribosomal subunit protein bL33 (55 aa).

It belongs to the bacterial ribosomal protein bL33 family.

The sequence is that of Large ribosomal subunit protein bL33 from Aeromonas hydrophila subsp. hydrophila (strain ATCC 7966 / DSM 30187 / BCRC 13018 / CCUG 14551 / JCM 1027 / KCTC 2358 / NCIMB 9240 / NCTC 8049).